A 209-amino-acid polypeptide reads, in one-letter code: N-(5'-phosphoribosyl)anthranilate isomerase (209 aa).

It belongs to the TrpF family.

The catalysed reaction is N-(5-phospho-beta-D-ribosyl)anthranilate = 1-(2-carboxyphenylamino)-1-deoxy-D-ribulose 5-phosphate. It functions in the pathway amino-acid biosynthesis; L-tryptophan biosynthesis; L-tryptophan from chorismate: step 3/5. This Pyrobaculum islandicum (strain DSM 4184 / JCM 9189 / GEO3) protein is N-(5'-phosphoribosyl)anthranilate isomerase.